Reading from the N-terminus, the 348-residue chain is S-adenosylmethionine-dependent nucleotide dehydratase RSAD2 (348 aa).

Positions 56–276 (SATPSSVNYH…LERHSSISCL (221 aa)) constitute a Radical SAM core domain. [4Fe-4S] cluster contacts are provided by C70, C74, and C77.

This sequence belongs to the radical SAM superfamily. RSAD2 family. [4Fe-4S] cluster is required as a cofactor. As to expression, expressed at low levels in spleen and head kidney.

Its subcellular location is the endoplasmic reticulum membrane. Its function is as follows. Interferon-inducible iron-sulfur (4FE-4S) cluster-binding antiviral protein which plays a major role in the cell antiviral state induced by type I and type II interferon. This chain is S-adenosylmethionine-dependent nucleotide dehydratase RSAD2, found in Oncorhynchus mykiss (Rainbow trout).